Consider the following 1035-residue polypeptide: FACT complex subunit SPT16 (1035 aa).

The stretch at 432-500 (FLKKEDEEEE…AKRRLTEQKG (69 aa)) forms a coiled coil. Disordered regions lie at residues 491 to 520 (AKRR…ASQV) and 920 to 1035 (EQGG…KRKK). Residues 499 to 519 (KGGQQTMKARKSNVSYKNASQ) are compositionally biased toward polar residues. Residues 929–985 (PDGEGSDAAEGDSESELDDETFNPSEDEEEEEEDSDEDYSDETEDSVDSEESADSEE) are compositionally biased toward acidic residues. A compositionally biased stretch (basic and acidic residues) spans 986–1006 (ESGKDWDELEEEARKADRESL).

Belongs to the peptidase M24 family. SPT16 subfamily. As to quaternary structure, component of the FACT complex (also called the DUF complex), a stable heterodimer of ssrp1 and supt16h. May also be a component of a ck2-spt16-ssrp1 complex composed of ssrp1, supt16h, csnk2a1, csnk2a2 and csnk2b. The FACT complex may also interact with vcp.

Its subcellular location is the nucleus. The protein localises to the chromosome. Component of the FACT complex, a general chromatin factor that acts to reorganize nucleosomes. The FACT complex is involved in multiple processes that require DNA as a template such as mRNA elongation, DNA replication and DNA repair. During transcription elongation the FACT complex acts as a histone chaperone that both destabilizes and restores nucleosomal structure. It facilitates the passage of RNA polymerase II and transcription by promoting the dissociation of one histone H2A-H2B dimer from the nucleosome, then subsequently promotes the reestablishment of the nucleosome following the passage of RNA polymerase II. In Xenopus laevis (African clawed frog), this protein is FACT complex subunit SPT16 (supt16h).